A 383-amino-acid chain; its full sequence is Lipid-A-disaccharide synthase (383 aa).

It belongs to the LpxB family.

It catalyses the reaction a lipid X + a UDP-2-N,3-O-bis[(3R)-3-hydroxyacyl]-alpha-D-glucosamine = a lipid A disaccharide + UDP + H(+). It functions in the pathway bacterial outer membrane biogenesis; LPS lipid A biosynthesis. Functionally, condensation of UDP-2,3-diacylglucosamine and 2,3-diacylglucosamine-1-phosphate to form lipid A disaccharide, a precursor of lipid A, a phosphorylated glycolipid that anchors the lipopolysaccharide to the outer membrane of the cell. The sequence is that of Lipid-A-disaccharide synthase from Alcanivorax borkumensis (strain ATCC 700651 / DSM 11573 / NCIMB 13689 / SK2).